Consider the following 608-residue polypeptide: MDDQNKNLLLATALSFLVILGWYFFFPPPEEAPQPATEVTETAPQGDTTAPAAAPSAGAATAEVDAAAAETEITEDVPRLTIDTPRVEGSISLKGGRIDDLRLKDYRETLDDDSPIVTLLSPAGQPHAYYALYGWAPGAGLGIEDVPTANTLWQAEAGATLTPDTPVTLTWDNGKGLTFSREVSIDEDYMFSITQSVTNSSGASVALAPYGTLARHGEPANLENFFVLHEGVVGMADGELSEIDYDDMTDFDPDPRDGSRAQVNTVTENGWIGFTGHYWMSTLIPAPGEAFRAIAKYDERRDIYQTDVVLPTVTLAAGESTSANTQLFAGAKEWATIREYERAGIEGFLDSIDWGWFFFFTKPIFAVLHWLNAAIGNMGVAIIALTFLLKILVFPLAYKSYASMARMKELQPEMEKLRERAGDDRQKMQKEMMELYKREKVNPAAGCLPILIQIPIFFSLYKVIFVTLELRHAAFFGPFQDLSVPDPTSLFNLFGLLPWAAPAPDSLLSLVFIGILPILLGVSMWVQQKLNPAPTDETQRMIFAWMPWVFMFMLGGFASGLVVYWITNNVITFTQQYLIMRSHGYTPDVFGNIKSGFKKDKAEKAEKK.

A helical membrane pass occupies residues 8 to 28 (LLLATALSFLVILGWYFFFPP). The tract at residues 33–61 (PQPATEVTETAPQGDTTAPAAAPSAGAAT) is disordered. 5 helical membrane-spanning segments follow: residues 378-398 (MGVA…PLAY), 448-468 (LPIL…FVTL), 482-502 (LSVP…WAAP), 506-526 (SLLS…SMWV), and 542-562 (IFAW…SGLV).

The protein belongs to the OXA1/ALB3/YidC family. Type 1 subfamily. In terms of assembly, interacts with the Sec translocase complex via SecD. Specifically interacts with transmembrane segments of nascent integral membrane proteins during membrane integration.

Its subcellular location is the cell inner membrane. Required for the insertion and/or proper folding and/or complex formation of integral membrane proteins into the membrane. Involved in integration of membrane proteins that insert both dependently and independently of the Sec translocase complex, as well as at least some lipoproteins. Aids folding of multispanning membrane proteins. This Ruegeria sp. (strain TM1040) (Silicibacter sp.) protein is Membrane protein insertase YidC.